The sequence spans 538 residues: Mevalonate kinase erg12 (538 aa).

Residues 1 to 87 are disordered; it reads MGNPRGRRTN…RNMSRKPSSP (87 aa). The span at 9–29 shows a compositional bias: polar residues; sequence TNGSIKTSKGTQRGTVSNLLS. Low complexity predominate over residues 57–69; it reads TTPSTTESTLKTT. ATP-binding positions include Lys-99, Ser-231, and 236–242; that span reads GAGLGSS. Residues Ser-242 and Glu-287 each contribute to the Mg(2+) site. Asp-298 (proton acceptor) is an active-site residue.

It belongs to the GHMP kinase family. Mevalonate kinase subfamily. Homodimer. The cofactor is Mg(2+).

It localises to the cytoplasm. The protein localises to the cytosol. It catalyses the reaction (R)-mevalonate + ATP = (R)-5-phosphomevalonate + ADP + H(+). Its pathway is isoprenoid biosynthesis; isopentenyl diphosphate biosynthesis via mevalonate pathway; isopentenyl diphosphate from (R)-mevalonate: step 1/3. Functionally, mevalonate kinase; part of the second module of ergosterol biosynthesis pathway that includes the middle steps of the pathway. Erg12 converts mevalonate into 5-phosphomevalonate. The second module is carried out in the vacuole and involves the formation of farnesyl diphosphate, which is also an important intermediate in the biosynthesis of ubiquinone, dolichol, heme and prenylated proteins. Activity by the mevalonate kinase erg12 (AFUA_4G07780) first converts mevalonate into 5-phosphomevalonate. 5-phosphomevalonate is then further converted to 5-diphosphomevalonate by the phosphomevalonate kinase erg8 (AFUA_5G10680). The diphosphomevalonate decarboxylase mvd1 (AFUA_4G07130) then produces isopentenyl diphosphate. The isopentenyl-diphosphate delta-isomerase idi1 (AFUA_6G11160) then catalyzes the 1,3-allylic rearrangement of the homoallylic substrate isopentenyl (IPP) to its highly electrophilic allylic isomer, dimethylallyl diphosphate (DMAPP). Finally the farnesyl diphosphate synthase erg20 (AFUA_5G02450) catalyzes the sequential condensation of isopentenyl pyrophosphate with dimethylallyl pyrophosphate, and then with the resultant geranylpyrophosphate to the ultimate product farnesyl pyrophosphate. The sequence is that of Mevalonate kinase erg12 from Aspergillus fumigatus (strain ATCC MYA-4609 / CBS 101355 / FGSC A1100 / Af293) (Neosartorya fumigata).